Here is a 429-residue protein sequence, read N- to C-terminus: Formate-dependent phosphoribosylglycinamide formyltransferase (429 aa).

Residues Glu-26–Leu-27 and Glu-86 contribute to the N(1)-(5-phospho-beta-D-ribosyl)glycinamide site. ATP contacts are provided by residues Arg-118, Lys-159, Glu-199 to Ile-202, and Glu-207. The 197-residue stretch at Glu-123–Leu-319 folds into the ATP-grasp domain. Residues Glu-276 and Glu-288 each contribute to the Mg(2+) site. Residues Asp-295, Lys-375, and Arg-382 to Arg-383 contribute to the N(1)-(5-phospho-beta-D-ribosyl)glycinamide site.

This sequence belongs to the PurK/PurT family. As to quaternary structure, homodimer.

The catalysed reaction is N(1)-(5-phospho-beta-D-ribosyl)glycinamide + formate + ATP = N(2)-formyl-N(1)-(5-phospho-beta-D-ribosyl)glycinamide + ADP + phosphate + H(+). Its pathway is purine metabolism; IMP biosynthesis via de novo pathway; N(2)-formyl-N(1)-(5-phospho-D-ribosyl)glycinamide from N(1)-(5-phospho-D-ribosyl)glycinamide (formate route): step 1/1. Its function is as follows. Involved in the de novo purine biosynthesis. Catalyzes the transfer of formate to 5-phospho-ribosyl-glycinamide (GAR), producing 5-phospho-ribosyl-N-formylglycinamide (FGAR). Formate is provided by PurU via hydrolysis of 10-formyl-tetrahydrofolate. This is Formate-dependent phosphoribosylglycinamide formyltransferase from Pyrococcus abyssi (strain GE5 / Orsay).